The chain runs to 211 residues: FMN-dependent NADH:quinone oxidoreductase (211 aa).

Residues 17–19 (SYS) and 102–105 (MWNF) each bind FMN.

The protein belongs to the azoreductase type 1 family. In terms of assembly, homodimer. Requires FMN as cofactor.

The enzyme catalyses 2 a quinone + NADH + H(+) = 2 a 1,4-benzosemiquinone + NAD(+). It catalyses the reaction N,N-dimethyl-1,4-phenylenediamine + anthranilate + 2 NAD(+) = 2-(4-dimethylaminophenyl)diazenylbenzoate + 2 NADH + 2 H(+). Its function is as follows. Quinone reductase that provides resistance to thiol-specific stress caused by electrophilic quinones. In terms of biological role, also exhibits azoreductase activity. Catalyzes the reductive cleavage of the azo bond in aromatic azo compounds to the corresponding amines. This is FMN-dependent NADH:quinone oxidoreductase from Geobacillus kaustophilus (strain HTA426).